Consider the following 382-residue polypeptide: PqqA peptide cyclase (382 aa).

The region spanning 8-223 (VKPPLWLLAE…VHRYREKMAA (216 aa)) is the Radical SAM core domain. Residues Cys-22, Cys-26, and Cys-29 each contribute to the [4Fe-4S] cluster site.

This sequence belongs to the radical SAM superfamily. PqqE family. In terms of assembly, interacts with PqqD. The interaction is necessary for activity of PqqE. The cofactor is [4Fe-4S] cluster.

The enzyme catalyses [PQQ precursor protein] + S-adenosyl-L-methionine = E-Y cross-linked-[PQQ precursor protein] + 5'-deoxyadenosine + L-methionine + H(+). Its pathway is cofactor biosynthesis; pyrroloquinoline quinone biosynthesis. Its function is as follows. Catalyzes the cross-linking of a glutamate residue and a tyrosine residue in the PqqA protein as part of the biosynthesis of pyrroloquinoline quinone (PQQ). The sequence is that of PqqA peptide cyclase from Erwinia tasmaniensis (strain DSM 17950 / CFBP 7177 / CIP 109463 / NCPPB 4357 / Et1/99).